The sequence spans 186 residues: Protein YABBY 2 (186 aa).

Residues 17-44 (CNFCNTIFAVSVPSNSMLNIVTVRCGHC) form a C4-type zinc finger.

It belongs to the YABBY family. Expressed in leaf blades, leaf sheaths and flowers.

It is found in the nucleus. This Oryza sativa subsp. japonica (Rice) protein is Protein YABBY 2 (YAB2).